An 873-amino-acid polypeptide reads, in one-letter code: Bifunctional uridylyltransferase/uridylyl-removing enzyme (873 aa).

A uridylyltransferase region spans residues 1–332 (MKYLSPLSLS…HQGEQDDAII (332 aa)). The tract at residues 333–692 (IDDDFQRRGR…ISKNASRGGT (360 aa)) is uridylyl-removing. Residues 451–573 (VDEHSIRLLK…VRDEERLDYL (123 aa)) enclose the HD domain. ACT domains lie at 693-777 (EIFV…RPPR) and 800-873 (LMEF…RLSS).

It belongs to the GlnD family. It depends on Mg(2+) as a cofactor.

The catalysed reaction is [protein-PII]-L-tyrosine + UTP = [protein-PII]-uridylyl-L-tyrosine + diphosphate. The enzyme catalyses [protein-PII]-uridylyl-L-tyrosine + H2O = [protein-PII]-L-tyrosine + UMP + H(+). Uridylyltransferase (UTase) activity is inhibited by glutamine, while glutamine activates uridylyl-removing (UR) activity. Its function is as follows. Modifies, by uridylylation and deuridylylation, the PII regulatory proteins (GlnB and homologs), in response to the nitrogen status of the cell that GlnD senses through the glutamine level. Under low glutamine levels, catalyzes the conversion of the PII proteins and UTP to PII-UMP and PPi, while under higher glutamine levels, GlnD hydrolyzes PII-UMP to PII and UMP (deuridylylation). Thus, controls uridylylation state and activity of the PII proteins, and plays an important role in the regulation of nitrogen assimilation and metabolism. The polypeptide is Bifunctional uridylyltransferase/uridylyl-removing enzyme (Aliivibrio fischeri (strain ATCC 700601 / ES114) (Vibrio fischeri)).